The chain runs to 127 residues: Large ribosomal subunit protein bL12 (127 aa).

It belongs to the bacterial ribosomal protein bL12 family. Homodimer. Part of the ribosomal stalk of the 50S ribosomal subunit. Forms a multimeric L10(L12)X complex, where L10 forms an elongated spine to which 2 to 4 L12 dimers bind in a sequential fashion. Binds GTP-bound translation factors.

Its function is as follows. Forms part of the ribosomal stalk which helps the ribosome interact with GTP-bound translation factors. Is thus essential for accurate translation. The chain is Large ribosomal subunit protein bL12 from Streptomyces virginiae (Streptomyces cinnamonensis).